The following is a 135-amino-acid chain: uncharacterized protein (135 aa).

This sequence belongs to the transcriptional regulatory CopG/NikR family.

This is an uncharacterized protein from Methanocaldococcus jannaschii (strain ATCC 43067 / DSM 2661 / JAL-1 / JCM 10045 / NBRC 100440) (Methanococcus jannaschii).